A 1208-amino-acid chain; its full sequence is MLLCDSCNKGWHIYCLSPPLKHIPLGNWYCLECLNTDEETFGFVPGKCLLLEDFKRIADRAKRKWFGSGTVSRTQIEKKFWEIVEGSGGEVEVMYGNDLDTSVYGSGFPRIGDQRPESVEADIWDEYCGSPWNLNNMPKLKGSMLQAIRHNINGVTVPWLYLGMLFSSFCWHFEDHCFYSVNYLHWGEAKCWYGIPGSAASAFEKVMRKTLPDLFDAQPDLLFQLVTMLSPTVLQENKVPVYTVLQEPGNFVITFPKSFHAGFNFGLNCAEAVNFATADWLPYGGSGAELYRLYRKPSVISHEELLCVVAKGNCCNNEGSIHLKKELLRIYSKEKTWREQLWKSGILRSSPMFVPECADSVGIEEDPTCIICQQFLHLSAIVCNCRPSVFACLEHWKHLCECEPTKLRLEYRYTLAELDMMVQEVEKFGGCKTQETKISQRPSSGTKRSIALNKKEGMQVSQARPADKWLLRASKVLDAAFSSVEYATLLKESEQFLWAGSEMDRVRDVTKSLNKAKIWAEAVSDCLSKVEGEVNDDSMKVHLEFIDELLRVNPVPCFNSGYLKLKDYAEEARKLSEKIDSALSSSPTITQLELLHSEVSRSPISLKKHEILSKKISSAKMLAKRAKRYLTDAKPPGIEMDALFKLNSEMLELHVQLPETEGILDLVKKSESARDKSNKVLTGSLSLENVEELLHEFDSFSINVPELNILRQYHVDTLSWISRFNDVMVDVREGKDQRKLISDLSSLLRDGASLGIQVEGLPLVEVELKKASCREKARTVYTARKSLDFIEQLLSEAVILHIEEEEIFVEISGILSTARCWEERASTILENETQMYELKDLVRMSVNIDAVLPTLQGIENTISSAETWLQKSEPFLSATSSMASSPCSMLELPVLKDLVTQAKLLNVQLQEPRILETLLLNCERWQCDNHQLLQETEDLLDNAKIDDGTHSNILPKIMDLITRVDSARRSGLALGLNFDELPKLRTASLKLGWCCKTITLSSSSPTSELLEDVGKPSLQHIQQHLKEGQTLEILPEEYYLGKRLMELKDTGLEWAKRARKVVTDSGALALEDVFELISEGENLPVHAEQELQSLRARSMLHCICLKPYNSRSMVSCSQCGEWYHTYCLKLHWRPKAYVCSACCPLAETTPQIDPARATEPERPSLNQRRTRMVATDAAVNDLKWKTRKHIKRTTKRSPQVHILPWFFT.

The PHD-type 1; degenerate zinc finger occupies 1-36 (MLLCDSCNKGWHIYCLSPPLKHIPLGNWYCLECLNT). Zn(2+) is bound by residues Cys4, Cys7, Cys30, and Cys33. Residues 126-292 (EYCGSPWNLN…YGGSGAELYR (167 aa)) enclose the JmjC domain. Fe cation contacts are provided by His172, Glu174, and His260. Zn(2+) contacts are provided by Cys369, Cys372, Cys383, Cys385, Cys392, His395, Cys400, and Cys402. Residues 369–421 (CIICQQFLHLSAIVCNCRPSVFACLEHWKHLCECEPTKLRLEYRYTLAELDMM) form a C5HC2 zinc finger. A Nuclear localization signal motif is present at residues 613–620 (SKKISSAK). A PHD-type 2 zinc finger spans residues 1099–1145 (MLHCICLKPYNSRSMVSCSQCGEWYHTYCLKLHWRPKAYVCSACCPL). Residues Cys1102, Cys1104, Cys1116, Cys1119, His1124, Cys1127, Cys1139, and Cys1142 each coordinate Zn(2+).

This sequence belongs to the JARID1 histone demethylase family. The cofactor is Fe(2+). Expressed in inflorescences, roots, seedlings and siliques, and, at low levels, in leaves and stems.

It is found in the nucleus. The catalysed reaction is N(6),N(6),N(6)-trimethyl-L-lysyl(4)-[histone H3] + 2-oxoglutarate + O2 = N(6),N(6)-dimethyl-L-lysyl(4)-[histone H3] + formaldehyde + succinate + CO2. It catalyses the reaction N(6),N(6)-dimethyl-L-lysyl(4)-[histone H3] + 2-oxoglutarate + O2 = N(6)-methyl-L-lysyl(4)-[histone H3] + formaldehyde + succinate + CO2. It carries out the reaction N(6)-methyl-L-lysyl(4)-[histone H3] + 2-oxoglutarate + O2 = L-lysyl(4)-[histone H3] + formaldehyde + succinate + CO2. The enzyme catalyses N(6),N(6),N(6)-trimethyl-L-lysyl(4)-[histone H3] + 3 2-oxoglutarate + 3 O2 = L-lysyl(4)-[histone H3] + 3 formaldehyde + 3 succinate + 3 CO2. Functionally, functions as a histone H3 'Lys-4' (H3K4me) demethylase involved in the regulation of gene expression. Active on H3K4me1, H3K4me2 and H3K4me3. Repressor of the abscisic acid (ABA) signaling pathway, especially during stomatal closure regulation. Negative regulator of responses to dehydration stress by binding directly to the chromatin of SRK2E/OST1 and demethylating H3K4me3 to regulates its expression. Together with JMJ14 and JMJ16, required for plant growth and development. The polypeptide is Lysine-specific demethylase JMJ17 (Arabidopsis thaliana (Mouse-ear cress)).